An 80-amino-acid chain; its full sequence is Defensin-like protein 13 (80 aa).

The first 29 residues, 1 to 29, serve as a signal peptide directing secretion; sequence MAKSATIVTLFFAALVFFAALEAPMVVEA. The residue at position 30 (Q30) is a Pyrrolidone carboxylic acid. 4 cysteine pairs are disulfide-bonded: C33/C80, C44/C65, C50/C74, and C54/C76.

This sequence belongs to the DEFL family. In terms of assembly, forms oligomers in its native state. In terms of tissue distribution, expressed predominantly in siliques and dry seeds.

The protein resides in the secreted. In terms of biological role, confers broad-spectrum resistance to pathogens. Possesses antifungal activity sensitive to inorganic cations in vitro. In Arabidopsis thaliana (Mouse-ear cress), this protein is Defensin-like protein 13 (PDF1.1).